The sequence spans 79 residues: Acyl carrier protein (79 aa).

A Carrier domain is found at 4–79; sequence AEIKDKVYDI…QAIDYIVNKK (76 aa). Serine 39 carries the post-translational modification O-(pantetheine 4'-phosphoryl)serine.

It belongs to the acyl carrier protein (ACP) family. Post-translationally, 4'-phosphopantetheine is transferred from CoA to a specific serine of apo-ACP by AcpS. This modification is essential for activity because fatty acids are bound in thioester linkage to the sulfhydryl of the prosthetic group.

It is found in the cytoplasm. It functions in the pathway lipid metabolism; fatty acid biosynthesis. In terms of biological role, carrier of the growing fatty acid chain in fatty acid biosynthesis. The polypeptide is Acyl carrier protein (Pelodictyon phaeoclathratiforme (strain DSM 5477 / BU-1)).